Reading from the N-terminus, the 76-residue chain is Gallerimycin (76 aa).

Residues 1-19 (MKIAFIVAISLAFLAVTSC) form the signal peptide.

The protein belongs to the invertebrate defensin family.

Functionally, has antifungal activity against the entomopathogenic fungus M.nisopliae, but does not display any antifungal activity against S.cerevisiae nor any antimicrobial activity against M.luteus, B.subtilis, and E.coli. The protein is Gallerimycin (LOC113523440) of Galleria mellonella (Greater wax moth).